The sequence spans 158 residues: Ribosome maturation factor RimP (158 aa).

This sequence belongs to the RimP family.

The protein resides in the cytoplasm. In terms of biological role, required for maturation of 30S ribosomal subunits. In Pseudomonas fluorescens (strain ATCC BAA-477 / NRRL B-23932 / Pf-5), this protein is Ribosome maturation factor RimP.